Here is a 128-residue protein sequence, read N- to C-terminus: 3-aminoacrylate deaminase RutC (128 aa).

The protein belongs to the RutC family. In terms of assembly, homotrimer.

It carries out the reaction (Z)-3-aminoacrylate + H2O + H(+) = 3-oxopropanoate + NH4(+). Functionally, involved in pyrimidine catabolism. Catalyzes the deamination of 3-aminoacrylate to malonic semialdehyde, a reaction that can also occur spontaneously. RutC may facilitate the reaction and modulate the metabolic fitness, rather than catalyzing essential functions. This is 3-aminoacrylate deaminase RutC from Escherichia coli O103:H2 (strain 12009 / EHEC).